A 173-amino-acid polypeptide reads, in one-letter code: Crossover junction endodeoxyribonuclease RuvC (173 aa).

Residues aspartate 8, glutamate 69, and aspartate 141 contribute to the active site. 3 residues coordinate Mg(2+): aspartate 8, glutamate 69, and aspartate 141.

It belongs to the RuvC family. Homodimer which binds Holliday junction (HJ) DNA. The HJ becomes 2-fold symmetrical on binding to RuvC with unstacked arms; it has a different conformation from HJ DNA in complex with RuvA. In the full resolvosome a probable DNA-RuvA(4)-RuvB(12)-RuvC(2) complex forms which resolves the HJ. Mg(2+) serves as cofactor.

Its subcellular location is the cytoplasm. It carries out the reaction Endonucleolytic cleavage at a junction such as a reciprocal single-stranded crossover between two homologous DNA duplexes (Holliday junction).. In terms of biological role, the RuvA-RuvB-RuvC complex processes Holliday junction (HJ) DNA during genetic recombination and DNA repair. Endonuclease that resolves HJ intermediates. Cleaves cruciform DNA by making single-stranded nicks across the HJ at symmetrical positions within the homologous arms, yielding a 5'-phosphate and a 3'-hydroxyl group; requires a central core of homology in the junction. The consensus cleavage sequence is 5'-(A/T)TT(C/G)-3'. Cleavage occurs on the 3'-side of the TT dinucleotide at the point of strand exchange. HJ branch migration catalyzed by RuvA-RuvB allows RuvC to scan DNA until it finds its consensus sequence, where it cleaves and resolves the cruciform DNA. The chain is Crossover junction endodeoxyribonuclease RuvC from Xylella fastidiosa (strain 9a5c).